The primary structure comprises 182 residues: Adenylate kinase (182 aa).

ATP is bound at residue 12 to 17 (GAGKGT). An NMP region spans residues 32–61 (STGELLRKEIEMNTNLGIQVKDIMNRGELV). Residues Thr-33, Arg-38, 59–61 (ELV), 85–88 (GYPR), and Gln-92 contribute to the AMP site. Positions 126-132 (LRGRKDD) are LID. Arg-127 serves as a coordination point for ATP. AMP is bound by residues Arg-129 and Arg-140. Arg-168 provides a ligand contact to ATP.

Belongs to the adenylate kinase family. Monomer.

It localises to the cytoplasm. The catalysed reaction is AMP + ATP = 2 ADP. It participates in purine metabolism; AMP biosynthesis via salvage pathway; AMP from ADP: step 1/1. Catalyzes the reversible transfer of the terminal phosphate group between ATP and AMP. Plays an important role in cellular energy homeostasis and in adenine nucleotide metabolism. This is Adenylate kinase from Prochlorococcus marinus (strain AS9601).